The chain runs to 286 residues: Structural protein p32K (286 aa).

Residues Met-1 to Gly-12 constitute a propeptide, removed in mature form. Residues Met-1–Asn-41 form a disordered region. Over residues Tyr-14 to Pro-36 the composition is skewed to basic residues.

The protein belongs to the atadenoviridae p32K protein family.

It is found in the virion. The chain is Structural protein p32K from Ovine adenovirus D serotype 7 (isolate OAV287) (OAdV-7).